We begin with the raw amino-acid sequence, 300 residues long: Actin-related protein 2/3 complex subunit 2-A (300 aa).

The protein belongs to the ARPC2 family. Component of the Arp2/3 complex composed of actr2/arp2, actr3/arp3, arpc1 (arpc1a or arpc1b), arpc2, arpc3, arpc4 and arpc5.

It localises to the cytoplasm. The protein resides in the cytoskeleton. The protein localises to the cell projection. It is found in the nucleus. Actin-binding component of the Arp2/3 complex, a multiprotein complex that mediates actin polymerization upon stimulation by nucleation-promoting factor (NPF). The Arp2/3 complex mediates the formation of branched actin networks in the cytoplasm, providing the force for cell motility. In addition to its role in the cytoplasmic cytoskeleton, the Arp2/3 complex also promotes actin polymerization in the nucleus, thereby regulating gene transcription and repair of damaged DNA. The Arp2/3 complex promotes homologous recombination (HR) repair in response to DNA damage by promoting nuclear actin polymerization, leading to drive motility of double-strand breaks (DSBs). The polypeptide is Actin-related protein 2/3 complex subunit 2-A (arpc2-a) (Xenopus laevis (African clawed frog)).